The primary structure comprises 119 residues: UPF0102 protein GFO_3098 (119 aa).

It belongs to the UPF0102 family.

In Christiangramia forsetii (strain DSM 17595 / CGMCC 1.15422 / KT0803) (Gramella forsetii), this protein is UPF0102 protein GFO_3098.